An 814-amino-acid polypeptide reads, in one-letter code: Protein ADP-ribosyltransferase PARP3 (814 aa).

Composition is skewed to basic and acidic residues over residues 1 to 19 (MKVH…EQKG) and 27 to 48 (EGKL…DDGR). Residues 1–52 (MKVHETRSHAHMSGDEQKGNLRKHKAEGKLPESEQSQKKAKPENDDGRSVNG) are disordered. Positions 38–186 (KKAKPENDDG…KRELGSADKP (149 aa)) constitute a PADR1 zinc-binding domain. Residues 105–150 (GALAKCPLCGGTLICDNEKRFVCGGEISEWCSCVFSTKDPPRKEEP) form a zinc ribbon region. Residues Cys-110, Cys-113, Cys-127, and Cys-137 each contribute to the Zn(2+) site. TPR repeat units follow at residues 182-215 (SADK…NGGK) and 277-310 (DLSV…YGKR). In terms of domain architecture, BRCT spans 187–274 (FVGMMISLMG…EAQPLEAYDV (88 aa)). The region spanning 322–422 (GGKIFEKDGL…KKIQKKPHKF (101 aa)) is the WGR domain. The PARP alpha-helical domain maps to 449 to 568 (HCKLDSFVAN…DINTASRLIG (120 aa)). Residues 577 to 808 (DPLSDRYKKL…VKYEEKGTEI (232 aa)) enclose the PARP catalytic domain.

It belongs to the ARTD/PARP family.

The protein resides in the nucleus. The enzyme catalyses L-aspartyl-[protein] + NAD(+) = 4-O-(ADP-D-ribosyl)-L-aspartyl-[protein] + nicotinamide. It carries out the reaction L-glutamyl-[protein] + NAD(+) = 5-O-(ADP-D-ribosyl)-L-glutamyl-[protein] + nicotinamide. In terms of biological role, involved in the base excision repair (BER) pathway, by catalyzing the poly(ADP-ribosyl)ation of a limited number of acceptor proteins involved in chromatin architecture and in DNA metabolism. This modification follows DNA damages and appears as an obligatory step in a detection/signaling pathway leading to the reparation of DNA strand breaks. The chain is Protein ADP-ribosyltransferase PARP3 (PARP3) from Arabidopsis thaliana (Mouse-ear cress).